We begin with the raw amino-acid sequence, 223 residues long: Serine/threonine/tyrosine-interacting protein A (223 aa).

Positions 28–176 constitute a Tyrosine-protein phosphatase domain; sequence EMQEILPGLF…LQEYEAIYLA (149 aa).

This sequence belongs to the protein-tyrosine phosphatase family. Non-receptor class subfamily.

Its function is as follows. Catalytically inactive phosphatase. In Xenopus laevis (African clawed frog), this protein is Serine/threonine/tyrosine-interacting protein A (styx-a).